Here is a 71-residue protein sequence, read N- to C-terminus: Exodeoxyribonuclease 7 small subunit (71 aa).

It belongs to the XseB family. Heterooligomer composed of large and small subunits.

The protein localises to the cytoplasm. The enzyme catalyses Exonucleolytic cleavage in either 5'- to 3'- or 3'- to 5'-direction to yield nucleoside 5'-phosphates.. Functionally, bidirectionally degrades single-stranded DNA into large acid-insoluble oligonucleotides, which are then degraded further into small acid-soluble oligonucleotides. In Streptococcus equi subsp. zooepidemicus (strain H70), this protein is Exodeoxyribonuclease 7 small subunit.